The primary structure comprises 496 residues: Lysine--tRNA ligase (496 aa).

Residues E405 and E412 each contribute to the Mg(2+) site.

The protein belongs to the class-II aminoacyl-tRNA synthetase family. Homodimer. It depends on Mg(2+) as a cofactor.

The protein resides in the cytoplasm. It carries out the reaction tRNA(Lys) + L-lysine + ATP = L-lysyl-tRNA(Lys) + AMP + diphosphate. The polypeptide is Lysine--tRNA ligase (Vesicomyosocius okutanii subsp. Calyptogena okutanii (strain HA)).